We begin with the raw amino-acid sequence, 421 residues long: Probable 26S proteasome regulatory subunit rpn6 (421 aa).

Residues 221-390 (DFKTAYSYFY…GCLIVYDEPQ (170 aa)) enclose the PCI domain.

Belongs to the proteasome subunit S9 family. In terms of assembly, component of the lid subcomplex of the 19S proteasome regulatory particle complex (also named PA700 complex). The 26S proteasome consists of a 20S proteasome core and two 19S regulatory subunits.

Functionally, component of the lid subcomplex of the 26S proteasome, a multiprotein complex involved in the ATP-dependent degradation of ubiquitinated proteins. In the complex, rpn6 is required for proteasome assembly. In Schizosaccharomyces pombe (strain 972 / ATCC 24843) (Fission yeast), this protein is Probable 26S proteasome regulatory subunit rpn6 (rpn6).